The chain runs to 258 residues: Protein T1 (258 aa).

The N-terminal stretch at 1–17 (MRRLCIILLVYVYATFA) is a signal peptide. N-linked (GlcNAc...) asparagine; by host glycans are attached at residues N67, N151, and N172.

This sequence belongs to the poxviruses A41 family.

The chain is Protein T1 from Rabbit fibroma virus (strain Kasza) (RFV).